A 214-amino-acid polypeptide reads, in one-letter code: Proteasome subunit beta (214 aa).

Residues 1 to 11 (MLDTSQEIMKG) constitute a propeptide, removed in mature form; by autocatalysis. Catalysis depends on Thr-12, which acts as the Nucleophile.

The protein belongs to the peptidase T1B family. As to quaternary structure, the 20S proteasome core is composed of 14 alpha and 14 beta subunits that assemble into four stacked heptameric rings, resulting in a barrel-shaped structure. The two inner rings, each composed of seven catalytic beta subunits, are sandwiched by two outer rings, each composed of seven alpha subunits. The catalytic chamber with the active sites is on the inside of the barrel. Has a gated structure, the ends of the cylinder being occluded by the N-termini of the alpha-subunits. Is capped at one or both ends by the proteasome regulatory ATPase, PAN.

The protein resides in the cytoplasm. The enzyme catalyses Cleavage of peptide bonds with very broad specificity.. Its activity is regulated as follows. The formation of the proteasomal ATPase PAN-20S proteasome complex, via the docking of the C-termini of PAN into the intersubunit pockets in the alpha-rings, triggers opening of the gate for substrate entry. Interconversion between the open-gate and close-gate conformations leads to a dynamic regulation of the 20S proteasome proteolysis activity. Its function is as follows. Component of the proteasome core, a large protease complex with broad specificity involved in protein degradation. The protein is Proteasome subunit beta of Methanoculleus marisnigri (strain ATCC 35101 / DSM 1498 / JR1).